Here is a 458-residue protein sequence, read N- to C-terminus: LysM domain-containing protein ARB_05157 (458 aa).

A signal peptide spans 1–19; the sequence is MVSLKVCFLLLASSELAFG. Residues 157-203 enclose the LysM 1 domain; sequence AFHLVKQGEDCGTISATYGITSAQFLAWNPSAGKDCTGLWANAYACV. The tract at residues 210 to 232 is disordered; that stretch reads PPKTTSQAPQPTPTKPSNGIETP. Over residues 212 to 229 the composition is skewed to polar residues; sequence KTTSQAPQPTPTKPSNGI. LysM domains are found at residues 245-291, 325-371, and 409-455; these read KFHL…YACV, KFYL…YSCV, and KFHF…YLCV.

Its subcellular location is the secreted. Functionally, might have a role in sequestration of chitin oligosaccharides (breakdown products of fungal cell walls that are released during invasion and act as triggers of host immunity) to dampen host defense. This chain is LysM domain-containing protein ARB_05157, found in Arthroderma benhamiae (strain ATCC MYA-4681 / CBS 112371) (Trichophyton mentagrophytes).